The primary structure comprises 275 residues: Transmembrane protein 106B (275 aa).

The tract at residues 1 to 24 (MGKSFSHLPLHSNKEDGYDGMTST) is disordered. Gly2 carries N-myristoyl glycine lipidation. The Cytoplasmic portion of the chain corresponds to 2 to 97 (GKSFSHLPLH…QRLRPRRTKL (96 aa)). The helical transmembrane segment at 98–118 (YVMASVFVCLLLSGLAVFFLF) threads the bilayer. The Lumenal portion of the chain corresponds to 119–275 (PRSIDVKYIG…EYLNVLQPQQ (157 aa)). 4 N-linked (GlcNAc...) asparagine glycosylation sites follow: Asn146, Asn152, Asn165, and Asn184. Cys215 and Cys254 form a disulfide bridge. Asn257 is a glycosylation site (N-linked (GlcNAc...) asparagine).

This sequence belongs to the TMEM106 family. Can form homomers. Interacts (via N-terminus) with MAP6 (via C-terminus). Interacts (via C-terminus) with the vacuolar-type ATPase subunit ATP6AP1. Interacts (via N-terminus) with AP2M1 and CLTC. Interacts with TMEM106C.

It localises to the late endosome membrane. The protein localises to the lysosome membrane. It is found in the cell membrane. Functionally, in neurons, involved in the transport of late endosomes/lysosomes. May be involved in dendrite morphogenesis and maintenance by regulating lysosomal trafficking. May act as a molecular brake for retrograde transport of late endosomes/lysosomes, possibly via its interaction with MAP6. In motoneurons, may mediate the axonal transport of lysosomes and axonal sorting at the initial segment. It remains unclear whether TMEM106B affects the transport of moving lysosomes in the anterograde or retrograde direction in neurites and whether it is particularly important in the sorting of lysosomes in axons or in dendrites. In neurons, may also play a role in the regulation of lysosomal size and responsiveness to stress. Required for proper lysosomal acidification. The chain is Transmembrane protein 106B (TMEM106B) from Bos taurus (Bovine).